A 318-amino-acid polypeptide reads, in one-letter code: Methionyl-tRNA formyltransferase (318 aa).

112–115 (SILP) contributes to the (6S)-5,6,7,8-tetrahydrofolate binding site.

The protein belongs to the Fmt family.

It carries out the reaction L-methionyl-tRNA(fMet) + (6R)-10-formyltetrahydrofolate = N-formyl-L-methionyl-tRNA(fMet) + (6S)-5,6,7,8-tetrahydrofolate + H(+). Functionally, attaches a formyl group to the free amino group of methionyl-tRNA(fMet). The formyl group appears to play a dual role in the initiator identity of N-formylmethionyl-tRNA by promoting its recognition by IF2 and preventing the misappropriation of this tRNA by the elongation apparatus. In Shewanella baltica (strain OS195), this protein is Methionyl-tRNA formyltransferase.